Consider the following 86-residue polypeptide: RNA-binding protein Hfq (86 aa).

A Sm domain is found at 9-68; that stretch reads DPYLNVLRKERIPVSIYLVNGIKLQGQVESFDQFVVLLKNTVSQMVYKHAISTVVPSRPV.

It belongs to the Hfq family. As to quaternary structure, homohexamer.

Its function is as follows. RNA chaperone that binds small regulatory RNA (sRNAs) and mRNAs to facilitate mRNA translational regulation in response to envelope stress, environmental stress and changes in metabolite concentrations. Also binds with high specificity to tRNAs. This chain is RNA-binding protein Hfq, found in Saccharophagus degradans (strain 2-40 / ATCC 43961 / DSM 17024).